We begin with the raw amino-acid sequence, 253 residues long: UPF0280 protein MA_1715 (253 aa).

This sequence belongs to the UPF0280 family.

This chain is UPF0280 protein MA_1715, found in Methanosarcina acetivorans (strain ATCC 35395 / DSM 2834 / JCM 12185 / C2A).